A 206-amino-acid polypeptide reads, in one-letter code: Dehydration-responsive element-binding protein 2D (206 aa).

The tract at residues 13–40 is disordered; the sequence is ANKKQRTVQASSRKGCMRGKGGPDNASC. A DNA-binding region (AP2/ERF) is located at residues 41 to 98; the sequence is TYKGVRQRTWGKWVAEIREPNRGARLWLGTFDTSREAALAYDSAARKLYGPEAHLNLP. The segment at 102 to 139 is disordered; the sequence is RSYPKTASSPASQTTPSSNTGGKSSSDSESPCSSNEMS. The span at 107 to 139 shows a compositional bias: low complexity; the sequence is TASSPASQTTPSSNTGGKSSSDSESPCSSNEMS.

It belongs to the AP2/ERF transcription factor family. ERF subfamily.

It localises to the nucleus. Putative transcriptional activator that binds specifically to the DNA sequence 5'-[AG]CCGAC-3'. Binding to the C-repeat/DRE element mediates high salinity-inducible transcription. The protein is Dehydration-responsive element-binding protein 2D (DREB2D) of Arabidopsis thaliana (Mouse-ear cress).